The chain runs to 179 residues: Replication restart protein DnaT (179 aa).

The disordered stretch occupies residues 156–179; sequence GGLPKRDVNTVSEPDSQIPPGFRG.

The protein belongs to the DnaT family. As to quaternary structure, homooligomerizes. Interacts with PriB. Component of the replication restart primosome. Primosome assembly occurs via a 'hand-off' mechanism. PriA binds to replication forks, subsequently PriB then DnaT bind; DnaT then displaces ssDNA to generate the helicase loading substrate.

In terms of biological role, involved in the restart of stalled replication forks, which reloads the replicative helicase on sites other than the origin of replication. Can function in multiple replication restart pathways. Displaces ssDNA from a PriB-ssDNA complex. Probably forms a spiral filament on ssDNA. The protein is Replication restart protein DnaT of Escherichia coli O1:K1 / APEC.